The sequence spans 828 residues: Neurotrophin receptor-interacting factor 1 (828 aa).

The KRAB 1 domain occupies valine 14–proline 85. A Glycyl lysine isopeptide (Lys-Gly) (interchain with G-Cter in ubiquitin) cross-link involves residue lysine 15. The SCAN box domain maps to arginine 158–serine 240. Residues valine 280–glutamate 370 form the KRAB 2 domain. Disordered stretches follow at residues arginine 328 to threonine 355, asparagine 377 to threonine 490, and glutamine 575 to serine 611. Polar residues predominate over residues proline 345 to threonine 355. Over residues glutamate 384–glutamate 394 the composition is skewed to basic and acidic residues. Basic residues predominate over residues lysine 418 to arginine 433. Polar residues predominate over residues arginine 458–glutamate 478. Over residues serine 589–glycine 599 the composition is skewed to basic residues. Positions serine 600–serine 611 are enriched in basic and acidic residues. 5 C2H2-type zinc fingers span residues cysteine 684–histidine 706, tyrosine 712–histidine 734, phenylalanine 740–histidine 762, tyrosine 768–histidine 790, and tyrosine 796–histidine 818.

Belongs to the krueppel C2H2-type zinc-finger protein family. As to quaternary structure, interacts with NGFR/p75(NTR). Interacts (via KRAB 1 domain) with TRAF6. Interacts (when ubiquitinated at Lys-15) with SQSTM1/p62. Ubiquitinated by TRAF6 at Lys-15 through 'Lys-63'-linked polyubiquitination. 'Lys-63'-linked polyubiquitination occurs in response to NGFR/p75(NTR) cleavage by gamma-secretase and promotes binding with the ICD cleavage product of NGFR/p75(NTR), followed by translocation into the nucleus and subsequent apoptosis. Ubiquitously expressed at low level. Expressed at higher level in testis.

The protein localises to the cytoplasm. It localises to the nucleus. In terms of biological role, transcription regulator involved in NGFR/p75(NTR)-mediated apoptosis. Essential component of the NGFR/p75(NTR) apoptotic pathway: upon ligand-binding and subsequent cleavage of NGFR/p75(NTR), binds to the intracellular domain (ICD) cleavage product of NGFR/p75(NTR), translocates to the nucleus and induces apoptosis, possibly by regulating expression of key regulators of apoptosis. Induces NGFR/p75(NTR)-mediated apoptosis in retina and sympathetic neurons. May also regulate expression of neuronal cholesterol biosynthesis genes. Probably acts as a transcription repressor: specifically binds to the 3'-end of zinc-finger coding genes and recruiting chromatin-modifying proteins such as SETDB1 and TRIM28/KAP1, leading to transcription repression. This is Neurotrophin receptor-interacting factor 1 (Nrif1) from Mus musculus (Mouse).